We begin with the raw amino-acid sequence, 355 residues long: Chromosomal protein D1 (355 aa).

An N-acetylmethionine modification is found at methionine 1. Residues 1 to 355 are disordered; it reads MEEVAVKKRG…NYNDSESVAA (355 aa). The segment at residues 7 to 14 is a DNA-binding region (a.T hook 1); that stretch reads KKRGRPSK. Serine 30 carries the phosphoserine modification. 2 DNA-binding regions (a.T hook) span residues 34-41 and 60-67; these read KKRGRPAK and KIQNDEDP. The span at 64 to 77 shows a compositional bias: acidic residues; sequence DEDPEDEGEEDGDG. Serine 80, serine 88, and serine 89 each carry phosphoserine. Positions 94–101 form a DNA-binding region, a.T hook 4; the sequence is KGRGRPKS. Serine 107, serine 109, and serine 112 each carry phosphoserine. Threonine 115 carries the phosphothreonine modification. Residue serine 118 is modified to Phosphoserine. Positions 119-130 are enriched in basic residues; it reads AKKRKAGRPKKH. The a.T hook 5 DNA-binding region spans 122-129; the sequence is RKAGRPKK. A phosphoserine; by CK2 mark is found at serine 133 and serine 135. Positions 135-147 are enriched in acidic residues; the sequence is SENEDDQDEDDDG. 5 positions are modified to phosphoserine: serine 149, serine 150, serine 161, serine 164, and serine 170. Residues 155–162 constitute a DNA-binding region (a.T hook 6); that stretch reads RPVGRPSA. A DNA-binding region (a.T hook 7) is located at residues 174 to 181; it reads RGLGRPKK. Phosphoserine; by CK2 is present on serine 186. Positions 196-203 form a DNA-binding region, a.T hook 8; it reads KKRGRPPQ. Residue serine 208 is modified to Phosphoserine. Positions 219-226 form a DNA-binding region, a.T hook 9; it reads RPRGRPKA. Positions 237–247 are enriched in acidic residues; that stretch reads NDDDQDDENSG. A phosphoserine mark is found at serine 246, serine 252, and serine 253. 2 consecutive DNA-binding regions (a.T hook) follow at residues 262-269 and 281-288; these read KKRGRPSL and KPRSRPAK. Serine 299 and serine 307 each carry phosphoserine. Positions 307–318 are enriched in basic and acidic residues; it reads SKKESNDEDRAV. Position 311 is a phosphoserine; by CK2 (serine 311). Threonine 321 is subject to Phosphothreonine. The residue at position 332 (serine 332) is a Phosphoserine; by CK2. The segment covering 345 to 355 has biased composition (polar residues); it reads DNYNDSESVAA.

It is found in the nucleus. Its subcellular location is the chromosome. This satellite DNA-associated protein is a double-stranded DNA binding protein specific for tracts of pure at DNA. It may play a role in organizing the higher-order structure of euchromatin as well as heterochromatin. The chain is Chromosomal protein D1 (D1) from Drosophila melanogaster (Fruit fly).